We begin with the raw amino-acid sequence, 613 residues long: Spastin (613 aa).

Residues 1–42 (MNSPGGRGKKKGSAGSSSAPPAAGASPSAPSGPAPPAPPAGA) form a disordered region. Residues 1 to 61 (MNSPGGRGKK…KRNLYYFSYP (61 aa)) lie on the Cytoplasmic side of the membrane. Low complexity predominate over residues 13-29 (SAGSSSAPPAAGASPSA). Pro residues predominate over residues 30–39 (PSGPAPPAPP). The segment at residues 62–82 (LFAAFALLRFVAFQLGLLVAW) is an intramembrane region (helical). Residues 83 to 613 (LCERLSRGAL…WNKDFGDTTV (531 aa)) lie on the Cytoplasmic side of the membrane. Positions 117-192 (HKRAFECISM…AMAKDRLQLL (76 aa)) constitute an MIT domain. A disordered region spans residues 224–312 (SESGAVPKKK…PAARKKKDTK (89 aa)). 3 stretches are compositionally biased toward polar residues: residues 237-257 (THTS…STGL), 264-274 (PSYSGISTASV), and 281-299 (PATS…NKPS). 379 to 386 (GPPGNGKT) contributes to the ATP binding site.

This sequence belongs to the AAA ATPase family. Spastin subfamily. Homohexamer. The homohexamer is stabilized by ATP-binding. The homohexamer may adopt a ring conformation through which microtubules pass prior to being severed. Interacts with microtubules.

Its subcellular location is the membrane. It is found in the cytoplasm. The protein localises to the cytoskeleton. It localises to the microtubule organizing center. The protein resides in the centrosome. Its subcellular location is the perinuclear region. It is found in the nucleus. It catalyses the reaction n ATP + n H2O + a microtubule = n ADP + n phosphate + (n+1) alpha/beta tubulin heterodimers.. Functionally, ATP-dependent microtubule severing protein that specifically recognizes and cuts microtubules that are polyglutamylated. Preferentially recognizes and acts on microtubules decorated with short polyglutamate tails: severing activity increases as the number of glutamates per tubulin rises from one to eight, but decreases beyond this glutamylation threshold. Microtubule severing promotes reorganization of cellular microtubule arrays and the release of microtubules from the centrosome following nucleation. Required for membrane traffic from the endoplasmic reticulum (ER) to the Golgi and for completion of the abscission stage of cytokinesis. Also plays a role in axon growth and the formation of axonal branches. The sequence is that of Spastin from Gallus gallus (Chicken).